Here is a 492-residue protein sequence, read N- to C-terminus: Dipeptide permease D (492 aa).

13 helical membrane-spanning segments follow: residues 14–34 (VVAL…LLIL), 49–69 (ALFS…GYLA), 91–111 (LVLG…AIIV), 138–158 (GGFS…PIAC), 167–187 (WAMG…IFLC), 212–232 (NWGW…VLFW), 236–256 (SVYA…RIYL), 269–289 (LIVV…QGGS), 312–332 (MFQS…AWLV), 344–364 (IWGK…ILTL), 379–399 (LMVL…PVAM), 413–433 (VLTG…AGVI), and 458–478 (VFSQ…VIWL).

This sequence belongs to the major facilitator superfamily. Proton-dependent oligopeptide transporter (POT/PTR) (TC 2.A.17) family. DtpD subfamily.

Its subcellular location is the cell inner membrane. Probable proton-dependent permease that transports dipeptides. The sequence is that of Dipeptide permease D from Klebsiella pneumoniae (strain 342).